Here is a 200-residue protein sequence, read N- to C-terminus: Prolactin (200 aa).

3 disulfide bridges follow: Cys4/Cys11, Cys59/Cys175, and Cys192/Cys200.

It belongs to the somatotropin/prolactin family. In terms of tissue distribution, pituitary gland.

It localises to the secreted. This is Prolactin (prl) from Protopterus aethiopicus (Marbled lungfish).